Here is a 206-residue protein sequence, read N- to C-terminus: Endoplasmic reticulum transmembrane protein 1 (206 aa).

Residues 1–7 (MSLYFTT) lie on the Lumenal side of the membrane. A helical transmembrane segment spans residues 8-28 (LFLLLTVEMVMLFIFVLPLPF). Residues 29-45 (RIRRGIFSTYNQLTAKQ) lie on the Cytoplasmic side of the membrane. A helical membrane pass occupies residues 46–66 (QIKTIIFITGCLVGLLFIDSW). Topologically, residues 67–104 (KRSQIRVSLYHNDNSGSIGSSAVTPIQALASRAYNQRN) are lumenal. A helical transmembrane segment spans residues 105–125 (MYISGFILYFSICIPTVMSIV). At 126–206 (KRLVKYQGLI…AAAEASKKGN (81 aa)) the chain is on the cytoplasmic side. The disordered stretch occupies residues 140–163 (KQKLNKPSSNSKKDSNEADSTKLQ). Residues 150–163 (SKKDSNEADSTKLQ) are compositionally biased toward basic and acidic residues. Residue Lys190 forms a Glycyl lysine isopeptide (Lys-Gly) (interchain with G-Cter in ubiquitin) linkage. The short motif at 203-206 (KKGN) is the Di-lysine motif element.

This sequence belongs to the BCAP29/BCAP31 family.

The protein localises to the endoplasmic reticulum membrane. Its function is as follows. May play a role in anterograde transport of membrane proteins from the endoplasmic reticulum to the Golgi. This Saccharomyces cerevisiae (strain ATCC 204508 / S288c) (Baker's yeast) protein is Endoplasmic reticulum transmembrane protein 1 (YET1).